The following is a 611-amino-acid chain: Dihydroxy-acid dehydratase (611 aa).

D81 provides a ligand contact to Mg(2+). C122 contributes to the [2Fe-2S] cluster binding site. Residues D123 and K124 each coordinate Mg(2+). K124 carries the N6-carboxylysine modification. C195 provides a ligand contact to [2Fe-2S] cluster. E491 contacts Mg(2+). S517 serves as the catalytic Proton acceptor.

The protein belongs to the IlvD/Edd family. Homodimer. [2Fe-2S] cluster serves as cofactor. The cofactor is Mg(2+).

It carries out the reaction (2R)-2,3-dihydroxy-3-methylbutanoate = 3-methyl-2-oxobutanoate + H2O. The enzyme catalyses (2R,3R)-2,3-dihydroxy-3-methylpentanoate = (S)-3-methyl-2-oxopentanoate + H2O. Its pathway is amino-acid biosynthesis; L-isoleucine biosynthesis; L-isoleucine from 2-oxobutanoate: step 3/4. The protein operates within amino-acid biosynthesis; L-valine biosynthesis; L-valine from pyruvate: step 3/4. Functionally, functions in the biosynthesis of branched-chain amino acids. Catalyzes the dehydration of (2R,3R)-2,3-dihydroxy-3-methylpentanoate (2,3-dihydroxy-3-methylvalerate) into 2-oxo-3-methylpentanoate (2-oxo-3-methylvalerate) and of (2R)-2,3-dihydroxy-3-methylbutanoate (2,3-dihydroxyisovalerate) into 2-oxo-3-methylbutanoate (2-oxoisovalerate), the penultimate precursor to L-isoleucine and L-valine, respectively. In Brucella anthropi (strain ATCC 49188 / DSM 6882 / CCUG 24695 / JCM 21032 / LMG 3331 / NBRC 15819 / NCTC 12168 / Alc 37) (Ochrobactrum anthropi), this protein is Dihydroxy-acid dehydratase.